Here is a 403-residue protein sequence, read N- to C-terminus: S-adenosylmethionine synthase (403 aa).

An ATP-binding site is contributed by His16. Mg(2+) is bound at residue Asp18. Glu44 is a binding site for K(+). 2 residues coordinate L-methionine: Glu57 and Gln100. Residues 100-110 (QSNDIAQGVDH) are flexible loop. Residues 167 to 169 (DAK), 238 to 239 (RF), Asp247, 253 to 254 (RK), Ala270, and Lys274 contribute to the ATP site. Residue Asp247 participates in L-methionine binding. Lys278 serves as a coordination point for L-methionine.

The protein belongs to the AdoMet synthase family. Homotetramer; dimer of dimers. Mg(2+) is required as a cofactor. It depends on K(+) as a cofactor.

The protein resides in the cytoplasm. The enzyme catalyses L-methionine + ATP + H2O = S-adenosyl-L-methionine + phosphate + diphosphate. It functions in the pathway amino-acid biosynthesis; S-adenosyl-L-methionine biosynthesis; S-adenosyl-L-methionine from L-methionine: step 1/1. Functionally, catalyzes the formation of S-adenosylmethionine (AdoMet) from methionine and ATP. The overall synthetic reaction is composed of two sequential steps, AdoMet formation and the subsequent tripolyphosphate hydrolysis which occurs prior to release of AdoMet from the enzyme. This chain is S-adenosylmethionine synthase, found in Verminephrobacter eiseniae (strain EF01-2).